Here is a 211-residue protein sequence, read N- to C-terminus: Arginine exporter protein ArgO (211 aa).

6 helical membrane-spanning segments follow: residues 1–21 (MISY…PLGP), 37–57 (LMIA…GIFG), 68–88 (LLAL…FGAL), 111–131 (IIAT…DTFV), 147–167 (WFAL…ALLA), and 179–199 (AQRI…FQLA).

It belongs to the LysE/ArgO transporter (TC 2.A.75) family.

It localises to the cell inner membrane. It catalyses the reaction L-arginine(in) = L-arginine(out). Functionally, involved in the export of arginine. Important to control the intracellular level of arginine and the correct balance between arginine and lysine. The sequence is that of Arginine exporter protein ArgO from Salmonella paratyphi C (strain RKS4594).